Reading from the N-terminus, the 84-residue chain is MELKKLMEHISITPDYRQAWKVVHKLSDILLLTICAVISGAEGWEDIEDFGETHLDFLKQYGDFENGIPVHDTIARVVSQGKIT.

In Escherichia coli (strain K12), this protein is Inactive transposase YbfQ (ybfQ).